The sequence spans 130 residues: Protein YoeA (130 aa).

Positions 1–28 are cleaved as a signal peptide; that stretch reads MLYNIPCRIYILSTLSLCISGIVSTATA. The region spanning 51–130 is the TBDR plug domain; sequence NLWESPATIQ…RCRRYSRGER (80 aa).

This sequence belongs to the TonB-dependent receptor family.

The polypeptide is Protein YoeA (yoeA) (Escherichia coli (strain K12)).